We begin with the raw amino-acid sequence, 107 residues long: Protein HitA (107 aa).

Residues 5 to 107 form the HIT domain; the sequence is IFCKIAAKEI…LHIHIMGTPV (103 aa). The short motif at 97-101 is the Histidine triad motif element; the sequence is HLHIH.

The polypeptide is Protein HitA (hitA) (Neisseria gonorrhoeae).